We begin with the raw amino-acid sequence, 136 residues long: MDDVEYRTEFSARERAGGDIEEGLELFGPATFKGMEGDPVQRFYNGIESAGRNLIRDGHIKLNKQEQTRLLSSVLRITYPNYKNPMGTVLGFYVTDGGRGPIDKGRLSHVQSFMEEVTDMDLRDLIRYCRLWLALK.

This is an uncharacterized protein from Frog virus 3 (isolate Goorha) (FV-3).